We begin with the raw amino-acid sequence, 623 residues long: NADPH-dependent diflavin oxidoreductase 1 (623 aa).

The Flavodoxin-like domain occupies 7-168; that stretch reads IVILYGSETG…VYFEYEKKVL (162 aa). Residues 13-18, 60-63, 106-115, and Asp142 each bind FMN; these read SETGNA, STTG, and LGDSSYPKFN. The 268-residue stretch at 224-491 folds into the FAD-binding FR-type domain; sequence ESLKVGRVNI…VGPGVGLAPL (268 aa). FAD contacts are provided by residues Arg383, 413 to 416, and 445 to 448; these read RYYS and GICT. 538–539 is a binding site for NADP(+); it reads SR. Trp623 is a binding site for FAD.

It belongs to the NADPH-dependent diflavin oxidoreductase NDOR1 family. In the N-terminal section; belongs to the flavodoxin family. This sequence in the C-terminal section; belongs to the flavoprotein pyridine nucleotide cytochrome reductase family. In terms of assembly, interacts with DRE2; as part of the cytosolic iron-sulfur (Fe-S) protein assembly (CIA) machinery. FAD serves as cofactor. The cofactor is FMN.

The protein resides in the cytoplasm. Its subcellular location is the mitochondrion. The enzyme catalyses 2 oxidized [2Fe-2S]-[protein] + NADPH = 2 reduced [2Fe-2S]-[protein] + NADP(+) + H(+). Its function is as follows. NADPH-dependent reductase which is a central component of the cytosolic iron-sulfur (Fe-S) protein assembly (CIA) machinery. Transfers electrons from NADPH via its FAD and FMN prosthetic groups to the [2Fe-2S] cluster of DRE2, another key component of the CIA machinery. In turn, this reduced cluster provides electrons for assembly of cytosolic iron-sulfur cluster proteins. Positively controls H(2)O(2)-induced cell death. This chain is NADPH-dependent diflavin oxidoreductase 1, found in Saccharomyces cerevisiae (strain ATCC 204508 / S288c) (Baker's yeast).